Consider the following 213-residue polypeptide: Adenylate kinase (213 aa).

Glycine 10 to threonine 15 serves as a coordination point for ATP. Residues serine 30 to valine 59 are NMP. AMP contacts are provided by residues threonine 31, arginine 36, glutamine 57–valine 59, glycine 85–arginine 88, and glutamine 92. Residues glycine 121–aspartate 158 form an LID region. An ATP-binding site is contributed by arginine 122. Residues cysteine 125 and cysteine 128 each contribute to the Zn(2+) site. ATP is bound at residue isoleucine 131 to phenylalanine 132. Zn(2+)-binding residues include cysteine 145 and cysteine 148. AMP-binding residues include arginine 155 and arginine 166. Lysine 194 lines the ATP pocket.

Belongs to the adenylate kinase family. Monomer.

The protein resides in the cytoplasm. It catalyses the reaction AMP + ATP = 2 ADP. It participates in purine metabolism; AMP biosynthesis via salvage pathway; AMP from ADP: step 1/1. Functionally, catalyzes the reversible transfer of the terminal phosphate group between ATP and AMP. Plays an important role in cellular energy homeostasis and in adenine nucleotide metabolism. This chain is Adenylate kinase, found in Borrelia duttonii (strain Ly).